The chain runs to 857 residues: Protein app1 (857 aa).

The 128-residue stretch at 6-133 (DTSTHGAEIR…NMDDIIRRVA (128 aa)) folds into the ADF-H domain. Disordered stretches follow at residues 167-562 (AKVA…VPQR), 585-622 (EVPS…VPQR), and 693-723 (QLNE…TEHT). Over residues 193-204 (KDSKDNSWDDSS) the composition is skewed to basic and acidic residues. Low complexity predominate over residues 205–217 (KQSNTQTANTTSN). Over residues 229–240 (AGRKEKSQENKP) the composition is skewed to basic and acidic residues. 5 stretches are compositionally biased toward polar residues: residues 276 to 295 (SIST…SHAP), 371 to 385 (PPAS…SPST), 399 to 409 (KQVSSNETSAQ), 443 to 452 (KISSFNSKAG), and 498 to 511 (SSAS…SVIT). The span at 522–561 (VVPEAPSVHQPPAAPVAPEVPSAPQRPAAPVVPEAPSVPQ) shows a compositional bias: low complexity. Pro residues-rich tracts occupy residues 587–596 (PSVPQPPVAP) and 602–611 (PSVPQPPVAP). Over residues 612–622 (VAPEVPSVPQR) the composition is skewed to low complexity. 2 SH3 domains span residues 725–785 (PTKT…ITGP) and 800–857 (GPGK…VEEI).

This Schizosaccharomyces pombe (strain 972 / ATCC 24843) (Fission yeast) protein is Protein app1 (app1).